The chain runs to 372 residues: Alpha-parvin (372 aa).

Positions Met1–Gly31 are disordered. Position 2 is an N-acetylalanine (Ala2). Phosphoserine is present on residues Ser8, Ser14, and Ser19. The interaction with ARHGAP31 stretch occupies residues Pro21 to Lys25. 2 positions are modified to phosphoserine: Ser28 and Ser62. Calponin-homology (CH) domains follow at residues Gln95–Arg202 and Asn262–Arg369. The required for interaction with TESK1 and ILK stretch occupies residues Gly223–Glu372.

It belongs to the parvin family. As to quaternary structure, component of the heterotrimeric IPP (ILK-PINCH-PARVIN) complex composed of ILK, LIMS1/PINCH and PARVA; the complex binds to F-actin via the C-terminal tail of LIMS1 and the N-terminal region of PARVA, promoting F-actin filament bundling. Interacts with TGFB1I1. Interacts with ARHGAP31. Interacts with the actin cytoskeleton. Interacts (via C-terminus) with TESK1 (via C-terminus); the interaction inhibits TESK1 kinase activity. Interacts with PXN/PAXILLIN (via LD motif 4).

It is found in the cell junction. It localises to the focal adhesion. Its subcellular location is the cell membrane. The protein resides in the cytoplasm. The protein localises to the cytoskeleton. It is found in the myofibril. It localises to the sarcomere. Its subcellular location is the z line. Functionally, plays a role in sarcomere organization and in smooth muscle cell contraction. Required for normal development of the embryonic cardiovascular system, and for normal septation of the heart outflow tract. Plays a role in sprouting angiogenesis and is required for normal adhesion of vascular smooth muscle cells to endothelial cells during blood vessel development. Plays a role in the reorganization of the actin cytoskeleton, formation of lamellipodia and ciliogenesis. Plays a role in the establishment of cell polarity, cell adhesion, cell spreading, and directed cell migration. Within the IPP (ILK-PINCH-PARVIN) complex, binds to F-actin, promoting F-actin bundling, a process required to generate force for actin cytoskeleton reorganization and subsequent dynamic cell adhesion events such as cell spreading and migration. The polypeptide is Alpha-parvin (Parva) (Mus musculus (Mouse)).